A 247-amino-acid chain; its full sequence is tRNA pseudouridine synthase A (247 aa).

Residue Asp52 is the Nucleophile of the active site. Tyr110 contributes to the substrate binding site.

Belongs to the tRNA pseudouridine synthase TruA family. As to quaternary structure, homodimer.

The enzyme catalyses uridine(38/39/40) in tRNA = pseudouridine(38/39/40) in tRNA. Functionally, formation of pseudouridine at positions 38, 39 and 40 in the anticodon stem and loop of transfer RNAs. This Hyphomonas neptunium (strain ATCC 15444) protein is tRNA pseudouridine synthase A.